The primary structure comprises 196 residues: Ankyrin repeat domain-containing protein 66 (196 aa).

ANK repeat units lie at residues 7–37 (SDMTKLHQAVAAGDYSLVKKILKKGLCDPNY), 43–72 (NDRTPLHWAAIKGQMEVIRLLIEYGARPCL), and 76–105 (VGWTPAHFAAEAGHLNILKTLHALHAAIDA). The segment at 152-196 (ERDEDWDAKKRELELSLPSLNQNMNKKNKKSRGPTRPSNTKGRRV) is disordered. Positions 187–196 (RPSNTKGRRV) are enriched in polar residues.

The protein is Ankyrin repeat domain-containing protein 66 (ANKRD66) of Homo sapiens (Human).